A 225-amino-acid polypeptide reads, in one-letter code: uncharacterized protein (225 aa).

A run of 6 helical transmembrane segments spans residues 25 to 45 (MMLA…IPFL), 57 to 77 (VFLI…ITVA), 83 to 103 (FIWD…NFAI), 109 to 129 (LYFH…SLAT), 135 to 155 (LLTT…FGYV), and 187 to 207 (IFAL…LIGV).

It is found in the cell membrane. This is an uncharacterized protein from Mycoplasma pneumoniae (strain ATCC 29342 / M129 / Subtype 1) (Mycoplasmoides pneumoniae).